We begin with the raw amino-acid sequence, 311 residues long: MEPREAGQHAGAADGAQEDVAFNLVILSLTEGLGLGGLLGNGAVLWLLSSNVYRNPFAIYLLDVACADLIFLGCHMVAIIPDLLQGRLDFPGFVQTSLATLRFFCYIVGLSLLVAVSVEQCLAALFPAWYSCRRPRHLTTCVCALTWACCLLLHLLLSGACTQFFGEPSRHLCRTLWLVAAVLLAVLCCTMCGASLMLLLQVERGPQRPPPRGFPTLILLAVLLFLFCGLPFGIYWLSRNLLWHIPHYFYHFSFLTAAVYCAAKPVVYFCLGSAQGRRLPLRLVLQRALGDEAELGAVRETSRRGLVDIAA.

The Extracellular portion of the chain corresponds to 1-25 (MEPREAGQHAGAADGAQEDVAFNLV). A helical transmembrane segment spans residues 26–46 (ILSLTEGLGLGGLLGNGAVLW). Topologically, residues 47 to 63 (LLSSNVYRNPFAIYLLD) are cytoplasmic. The helical transmembrane segment at 64-84 (VACADLIFLGCHMVAIIPDLL) threads the bilayer. Topologically, residues 85-95 (QGRLDFPGFVQ) are extracellular. Residues 96 to 116 (TSLATLRFFCYIVGLSLLVAV) traverse the membrane as a helical segment. Residues 117–136 (SVEQCLAALFPAWYSCRRPR) are Cytoplasmic-facing. The chain crosses the membrane as a helical span at residues 137–157 (HLTTCVCALTWACCLLLHLLL). The Extracellular portion of the chain corresponds to 158–177 (SGACTQFFGEPSRHLCRTLW). A helical transmembrane segment spans residues 178–198 (LVAAVLLAVLCCTMCGASLML). Residues 199-216 (LLQVERGPQRPPPRGFPT) lie on the Cytoplasmic side of the membrane. A helical transmembrane segment spans residues 217–237 (LILLAVLLFLFCGLPFGIYWL). The Extracellular segment spans residues 238–251 (SRNLLWHIPHYFYH). Residues 252–272 (FSFLTAAVYCAAKPVVYFCLG) traverse the membrane as a helical segment. The Cytoplasmic portion of the chain corresponds to 273-311 (SAQGRRLPLRLVLQRALGDEAELGAVRETSRRGLVDIAA).

It belongs to the G-protein coupled receptor 1 family. Mas subfamily.

Its subcellular location is the cell membrane. Its function is as follows. Orphan receptor. May regulate nociceptor function and/or development, including the sensation or modulation of pain. The polypeptide is Mas-related G-protein coupled receptor member E (MRGPRE) (Macaca fascicularis (Crab-eating macaque)).